A 354-amino-acid polypeptide reads, in one-letter code: DNA polymerase IV (354 aa).

Residues 3-188 (VIFVDFDYFF…LDIDEIPGIG (186 aa)) form the UmuC domain. Positions 7 and 105 each coordinate Mg(2+). The active site involves Glu-106.

Belongs to the DNA polymerase type-Y family. As to quaternary structure, monomer. It depends on Mg(2+) as a cofactor.

The protein resides in the cytoplasm. It carries out the reaction DNA(n) + a 2'-deoxyribonucleoside 5'-triphosphate = DNA(n+1) + diphosphate. In terms of biological role, poorly processive, error-prone DNA polymerase involved in untargeted mutagenesis. Copies undamaged DNA at stalled replication forks, which arise in vivo from mismatched or misaligned primer ends. These misaligned primers can be extended by PolIV. Exhibits no 3'-5' exonuclease (proofreading) activity. May be involved in translesional synthesis. The protein is DNA polymerase IV of Sulfolobus acidocaldarius (strain ATCC 33909 / DSM 639 / JCM 8929 / NBRC 15157 / NCIMB 11770).